Here is a 44-residue protein sequence, read N- to C-terminus: Conotoxin Rg11a (44 aa).

4 disulfide bridges follow: Cys1/Cys15, Cys8/Cys22, Cys14/Cys30, and Cys21/Cys36.

Expressed by the venom duct.

The protein resides in the secreted. Neurotoxin. Elicits hypersensibility when injected intracranially in mice. May act via potassium channel currents. The chain is Conotoxin Rg11a from Conus regius (Crown cone).